Here is a 318-residue protein sequence, read N- to C-terminus: DNA-directed RNA polymerase subunit alpha (318 aa).

The tract at residues 1 to 227 (MTQFEIECLD…NLFSPLKTID (227 aa)) is alpha N-terminal domain (alpha-NTD). The segment at 241–318 (HINQILIEEL…KEKTTKIYNK (78 aa)) is alpha C-terminal domain (alpha-CTD).

The protein belongs to the RNA polymerase alpha chain family. In terms of assembly, in plastids the minimal PEP RNA polymerase catalytic core is composed of four subunits: alpha, beta, beta', and beta''. When a (nuclear-encoded) sigma factor is associated with the core the holoenzyme is formed, which can initiate transcription.

The protein resides in the plastid. The protein localises to the chloroplast. It catalyses the reaction RNA(n) + a ribonucleoside 5'-triphosphate = RNA(n+1) + diphosphate. In terms of biological role, DNA-dependent RNA polymerase catalyzes the transcription of DNA into RNA using the four ribonucleoside triphosphates as substrates. This is DNA-directed RNA polymerase subunit alpha from Guillardia theta (Cryptophyte).